The chain runs to 421 residues: Gamma-glutamyl phosphate reductase (421 aa).

The protein belongs to the gamma-glutamyl phosphate reductase family.

The protein localises to the cytoplasm. The catalysed reaction is L-glutamate 5-semialdehyde + phosphate + NADP(+) = L-glutamyl 5-phosphate + NADPH + H(+). It functions in the pathway amino-acid biosynthesis; L-proline biosynthesis; L-glutamate 5-semialdehyde from L-glutamate: step 2/2. In terms of biological role, catalyzes the NADPH-dependent reduction of L-glutamate 5-phosphate into L-glutamate 5-semialdehyde and phosphate. The product spontaneously undergoes cyclization to form 1-pyrroline-5-carboxylate. This is Gamma-glutamyl phosphate reductase from Leptospira biflexa serovar Patoc (strain Patoc 1 / ATCC 23582 / Paris).